The following is a 445-amino-acid chain: Phospho-alpha-glucosidase PagL (445 aa).

4–71 (YSICIVGGGS…ELEEVIWTTD (68 aa)) is a binding site for NAD(+). The substrate site is built by R94 and N148. Mn(2+) is bound at residue C171. Residue D172 is the Proton donor of the active site. Mn(2+) is bound at residue H201. Y264 acts as the Proton acceptor in catalysis. R284 lines the substrate pocket.

This sequence belongs to the glycosyl hydrolase 4 family. As to quaternary structure, homotetramer. NAD(+) serves as cofactor. It depends on Mn(2+) as a cofactor.

In terms of biological role, phospho-alpha-glucosidase that catalyzes the hydrolysis of p-nitrophenyl-alpha-D-glucopyranoside 6-phosphate, but is not able to cleave 'natural' phospho-alpha-glucosides produced via the phosphoenolpyruvate-dependent sugar phosphotransferase system (PEP-PTS). This is Phospho-alpha-glucosidase PagL (pagL) from Clostridium acetobutylicum (strain ATCC 824 / DSM 792 / JCM 1419 / IAM 19013 / LMG 5710 / NBRC 13948 / NRRL B-527 / VKM B-1787 / 2291 / W).